The sequence spans 164 residues: Thiol peroxidase (164 aa).

One can recognise a Thioredoxin domain in the interval 17-162; the sequence is IKVGDTFPDF…YDEVLQAAQA (146 aa). The active-site Cysteine sulfenic acid (-SOH) intermediate is Cys-58. Cys-58 and Cys-92 are oxidised to a cystine.

The protein belongs to the peroxiredoxin family. Tpx subfamily. In terms of assembly, homodimer.

It carries out the reaction a hydroperoxide + [thioredoxin]-dithiol = an alcohol + [thioredoxin]-disulfide + H2O. In terms of biological role, thiol-specific peroxidase that catalyzes the reduction of hydrogen peroxide and organic hydroperoxides to water and alcohols, respectively. Plays a role in cell protection against oxidative stress by detoxifying peroxides. The protein is Thiol peroxidase of Clostridium acetobutylicum (strain ATCC 824 / DSM 792 / JCM 1419 / IAM 19013 / LMG 5710 / NBRC 13948 / NRRL B-527 / VKM B-1787 / 2291 / W).